The following is a 518-amino-acid chain: Phenylacetate 2-hydroxylase (518 aa).

A heme-binding site is contributed by Cys437.

The protein belongs to the cytochrome P450 family.

The enzyme catalyses 2-phenylacetate + reduced [NADPH--hemoprotein reductase] + O2 = (2-hydroxyphenyl)acetate + oxidized [NADPH--hemoprotein reductase] + H2O + H(+). Its pathway is aromatic compound metabolism; phenylacetate degradation. Its function is as follows. Catalyzes the hydroxylation of phenylacetate to 2-hydroxyphenylacetate in the homogentisate pathway. The homogentisate pathway is used to catabolize phenylacetate and use it as a carbon source. Can also catalyze the hydroxylation of 3-hydroxyphenylacetate to 2,5-dihydroxyphenylacetate (homogentisate) at low efficiency. In Emericella nidulans (Aspergillus nidulans), this protein is Phenylacetate 2-hydroxylase (phacA).